Consider the following 189-residue polypeptide: dCTP deaminase (189 aa).

DCTP is bound by residues 112-117, 136-138, glutamine 157, tyrosine 171, and glutamine 181; these read KSTYAR and TLE. The active-site Proton donor/acceptor is the glutamate 138.

Belongs to the dCTP deaminase family. As to quaternary structure, homotrimer.

The catalysed reaction is dCTP + H2O + H(+) = dUTP + NH4(+). The protein operates within pyrimidine metabolism; dUMP biosynthesis; dUMP from dCTP (dUTP route): step 1/2. Its function is as follows. Catalyzes the deamination of dCTP to dUTP. The protein is dCTP deaminase of Nitrosospira multiformis (strain ATCC 25196 / NCIMB 11849 / C 71).